Consider the following 94-residue polypeptide: Protein SpdA (94 aa).

Residues 41 to 68 (GPILLALVAAGGSVGVVMTLCLLLQTAA) traverse the membrane as a helical segment.

The protein resides in the cell membrane. In terms of biological role, involved in plasmid transfer. This chain is Protein SpdA (spdA), found in Streptomyces lividans.